A 94-amino-acid chain; its full sequence is Probable Fe(2+)-trafficking protein (94 aa).

This sequence belongs to the Fe(2+)-trafficking protein family.

Its function is as follows. Could be a mediator in iron transactions between iron acquisition and iron-requiring processes, such as synthesis and/or repair of Fe-S clusters in biosynthetic enzymes. The protein is Probable Fe(2+)-trafficking protein of Haemophilus ducreyi (strain 35000HP / ATCC 700724).